The chain runs to 185 residues: Acireductone dioxygenase (185 aa).

Fe(2+)-binding residues include histidine 97, histidine 99, glutamate 103, and histidine 141. Residues histidine 97, histidine 99, glutamate 103, and histidine 141 each contribute to the Ni(2+) site.

The protein belongs to the acireductone dioxygenase (ARD) family. In terms of assembly, monomer. The cofactor is Fe(2+). It depends on Ni(2+) as a cofactor.

It catalyses the reaction 1,2-dihydroxy-5-(methylsulfanyl)pent-1-en-3-one + O2 = 3-(methylsulfanyl)propanoate + CO + formate + 2 H(+). The enzyme catalyses 1,2-dihydroxy-5-(methylsulfanyl)pent-1-en-3-one + O2 = 4-methylsulfanyl-2-oxobutanoate + formate + 2 H(+). Its pathway is amino-acid biosynthesis; L-methionine biosynthesis via salvage pathway; L-methionine from S-methyl-5-thio-alpha-D-ribose 1-phosphate: step 5/6. In terms of biological role, catalyzes 2 different reactions between oxygen and the acireductone 1,2-dihydroxy-3-keto-5-methylthiopentene (DHK-MTPene) depending upon the metal bound in the active site. Fe-containing acireductone dioxygenase (Fe-ARD) produces formate and 2-keto-4-methylthiobutyrate (KMTB), the alpha-ketoacid precursor of methionine in the methionine recycle pathway. Ni-containing acireductone dioxygenase (Ni-ARD) produces methylthiopropionate, carbon monoxide and formate, and does not lie on the methionine recycle pathway. This chain is Acireductone dioxygenase, found in Stenotrophomonas maltophilia (strain R551-3).